We begin with the raw amino-acid sequence, 357 residues long: Queuosine-tRNA galactosyltransferase (357 aa).

This sequence belongs to the glycosyltransferase 2 family.

It is found in the cytoplasm. It carries out the reaction queuosine(34) in tRNA(Tyr) + UDP-alpha-D-galactose = O-5''-beta-D-galactosylqueuosine(34) in tRNA(Tyr) + UDP + H(+). Its function is as follows. Glycosyltransferase that specifically catalyzes galactosylation of cytoplasmic tRNA(Tyr) modified with queuosine at position 34 (queuosine(34)). Galactosylates the cyclopentene hydroxyl group of queuosine(34) in tRNA(Tyr) to form galactosyl-queuosine(34). Mannosylation of queuosine(34) in tRNA(Tyr) is required to slow-down elongation at cognate codons UAC and suppress stop codon readthrough, thereby regulating protein translation. This chain is Queuosine-tRNA galactosyltransferase, found in Mus musculus (Mouse).